The chain runs to 76 residues: uncharacterized protein (76 aa).

Transmembrane regions (helical) follow at residues 1 to 21 (MTAI…HLQL), 35 to 55 (CFDI…LLII), and 56 to 76 (NNKF…NTMI).

It is found in the cell membrane. This is an uncharacterized protein from Borreliella burgdorferi (strain ATCC 35210 / DSM 4680 / CIP 102532 / B31) (Borrelia burgdorferi).